We begin with the raw amino-acid sequence, 399 residues long: MSIFIHHGAPGSYKTSGALWLRLLPAIKSGRHIITNVRGLNLERMAKYLKMDVSDISIEFIDTDHPDGRLTMARFWHWARKDAFLFIDECGRIWPPRLTVTNLKALDTPPDLVAEDRPESFEVAFDMHRHHGWDICLTTPNIAKVHNMIREAAEIGYRHFNRATVGLGAKFTLTTHDAANSGQMDSHALTRQVKKIPSPIFKMYASTTTGKARDTMAGTALWKDRKILFLFGMVFLMFSYSFYGLHDNPIFTGGNDATIESEQSEPQSKATVGNAVGSKAVAPASFGFCIGRLCVQDGFVTVGDERYRLVDNLDIPYRGLWATGHHIYKDTLTVFFETESGSVPTELFASSYRYKVLPLPDFNHFVVFDTFAAQALWVEVKRGLPIKTENDKKGLNSIF.

Increases the permeability of the small intestine mucosa by affecting the structure of intercellular tight junctions (zonula occludens). The protein is Zona occludens toxin (zot) of Vibrio cholerae serotype O1 (strain ATCC 39315 / El Tor Inaba N16961).